The sequence spans 140 residues: ATP synthase epsilon chain (140 aa).

It belongs to the ATPase epsilon chain family. As to quaternary structure, F-type ATPases have 2 components, CF(1) - the catalytic core - and CF(0) - the membrane proton channel. CF(1) has five subunits: alpha(3), beta(3), gamma(1), delta(1), epsilon(1). CF(0) has three main subunits: a, b and c.

It localises to the cell inner membrane. Functionally, produces ATP from ADP in the presence of a proton gradient across the membrane. The polypeptide is ATP synthase epsilon chain (Xanthomonas oryzae pv. oryzae (strain MAFF 311018)).